A 133-amino-acid polypeptide reads, in one-letter code: Minor capsid protein VP2 (133 aa).

It belongs to the vesivirus VP2 protein family. Homooligomer. The portal-like structure consists in 12 copies of VP2. Interacts with capsid protein VP1.

It is found in the virion. The protein resides in the host cytoplasm. Minor structural protein that forms a portal-like structure at a unique three-fold axis of symmetry, following binding to the host receptor. The channel formed by VP2 may allow the delivery of the viral genome through the host endosomal membrane. In Canis lupus familiaris (Dog), this protein is Minor capsid protein VP2.